Reading from the N-terminus, the 211-residue chain is Thiamine-phosphate synthase (211 aa).

4-amino-2-methyl-5-(diphosphooxymethyl)pyrimidine-binding positions include 37 to 41 (QLRIK) and asparagine 69. The Mg(2+) site is built by aspartate 70 and aspartate 89. Residue serine 108 participates in 4-amino-2-methyl-5-(diphosphooxymethyl)pyrimidine binding. 134–136 (TQT) lines the 2-[(2R,5Z)-2-carboxy-4-methylthiazol-5(2H)-ylidene]ethyl phosphate pocket. A 4-amino-2-methyl-5-(diphosphooxymethyl)pyrimidine-binding site is contributed by lysine 137. 2-[(2R,5Z)-2-carboxy-4-methylthiazol-5(2H)-ylidene]ethyl phosphate contacts are provided by residues glycine 166 and 186-187 (VS).

It belongs to the thiamine-phosphate synthase family. The cofactor is Mg(2+).

The enzyme catalyses 2-[(2R,5Z)-2-carboxy-4-methylthiazol-5(2H)-ylidene]ethyl phosphate + 4-amino-2-methyl-5-(diphosphooxymethyl)pyrimidine + 2 H(+) = thiamine phosphate + CO2 + diphosphate. It catalyses the reaction 2-(2-carboxy-4-methylthiazol-5-yl)ethyl phosphate + 4-amino-2-methyl-5-(diphosphooxymethyl)pyrimidine + 2 H(+) = thiamine phosphate + CO2 + diphosphate. The catalysed reaction is 4-methyl-5-(2-phosphooxyethyl)-thiazole + 4-amino-2-methyl-5-(diphosphooxymethyl)pyrimidine + H(+) = thiamine phosphate + diphosphate. Its pathway is cofactor biosynthesis; thiamine diphosphate biosynthesis; thiamine phosphate from 4-amino-2-methyl-5-diphosphomethylpyrimidine and 4-methyl-5-(2-phosphoethyl)-thiazole: step 1/1. Functionally, condenses 4-methyl-5-(beta-hydroxyethyl)thiazole monophosphate (THZ-P) and 2-methyl-4-amino-5-hydroxymethyl pyrimidine pyrophosphate (HMP-PP) to form thiamine monophosphate (TMP). In Escherichia coli O157:H7, this protein is Thiamine-phosphate synthase.